Reading from the N-terminus, the 335-residue chain is Ferrochelatase (335 aa).

The Fe cation site is built by H194 and E275.

The protein belongs to the ferrochelatase family.

Its subcellular location is the cytoplasm. It catalyses the reaction heme b + 2 H(+) = protoporphyrin IX + Fe(2+). Its pathway is porphyrin-containing compound metabolism; protoheme biosynthesis; protoheme from protoporphyrin-IX: step 1/1. Functionally, catalyzes the ferrous insertion into protoporphyrin IX. The protein is Ferrochelatase of Sodalis glossinidius (strain morsitans).